The following is a 153-amino-acid chain: MHNKTVRHLTILILTIAGIFIIDQNIKSLFVDGYRYYSDCIDLILVYNKGVAFSMFAFLDESLKYIQLVLVFGVFGYMLYLNQLCYAIPAGLMLGGAFSNIYDRFIHGGVVDMVYWHCGFDFAVFNFADVMIDVAVVWILLLNFKPKFCKNHS.

The next 3 helical transmembrane spans lie at 11-31 (ILIL…SLFV), 39-59 (DCID…FAFL), and 68-88 (LVLV…CYAI). Active-site residues include aspartate 112 and aspartate 129. The helical transmembrane segment at 122–142 (FAVFNFADVMIDVAVVWILLL) threads the bilayer.

This sequence belongs to the peptidase A8 family.

It is found in the cell inner membrane. The catalysed reaction is Release of signal peptides from bacterial membrane prolipoproteins. Hydrolyzes -Xaa-Yaa-Zaa-|-(S,diacylglyceryl)Cys-, in which Xaa is hydrophobic (preferably Leu), and Yaa (Ala or Ser) and Zaa (Gly or Ala) have small, neutral side chains.. The protein operates within protein modification; lipoprotein biosynthesis (signal peptide cleavage). Functionally, this protein specifically catalyzes the removal of signal peptides from prolipoproteins. The sequence is that of Lipoprotein signal peptidase from Sulfurimonas denitrificans (strain ATCC 33889 / DSM 1251) (Thiomicrospira denitrificans (strain ATCC 33889 / DSM 1251)).